The sequence spans 141 residues: uncharacterized protein (141 aa).

Helical transmembrane passes span 41-61 and 95-115; these read LIML…NYLF and IIFL…SGFF.

Its subcellular location is the cell membrane. This is an uncharacterized protein from Rickettsia prowazekii (strain Madrid E).